The chain runs to 545 residues: Chaperonin GroEL (545 aa).

ATP-binding positions include 30-33, lysine 51, 87-91, glycine 415, 479-481, and aspartate 495; these read TLGP, DGTTT, and NAA. The interval 526-545 is disordered; sequence KEDKPDLGGAGGMGGMGGMM. Over residues 533–545 the composition is skewed to gly residues; the sequence is GGAGGMGGMGGMM.

This sequence belongs to the chaperonin (HSP60) family. Forms a cylinder of 14 subunits composed of two heptameric rings stacked back-to-back. Interacts with the co-chaperonin GroES.

The protein localises to the cytoplasm. It carries out the reaction ATP + H2O + a folded polypeptide = ADP + phosphate + an unfolded polypeptide.. Together with its co-chaperonin GroES, plays an essential role in assisting protein folding. The GroEL-GroES system forms a nano-cage that allows encapsulation of the non-native substrate proteins and provides a physical environment optimized to promote and accelerate protein folding. The sequence is that of Chaperonin GroEL from Sodalis glossinidius.